The primary structure comprises 161 residues: Cytochrome b6-f complex subunit 4 (161 aa).

The next 3 helical transmembrane spans lie at 37–57 (LLYI…GLAV), 96–116 (LLGV…PFIE), and 130–150 (AMTV…GAAF).

It belongs to the cytochrome b family. PetD subfamily. In terms of assembly, the 4 large subunits of the cytochrome b6-f complex are cytochrome b6, subunit IV (17 kDa polypeptide, PetD), cytochrome f and the Rieske protein, while the 4 small subunits are PetG, PetL, PetM and PetN. The complex functions as a dimer.

Its subcellular location is the cellular thylakoid membrane. Its function is as follows. Component of the cytochrome b6-f complex, which mediates electron transfer between photosystem II (PSII) and photosystem I (PSI), cyclic electron flow around PSI, and state transitions. This Synechococcus elongatus protein is Cytochrome b6-f complex subunit 4.